We begin with the raw amino-acid sequence, 122 residues long: Large ribosomal subunit protein uL14c (122 aa).

This sequence belongs to the universal ribosomal protein uL14 family. As to quaternary structure, part of the 50S ribosomal subunit.

It is found in the plastid. It localises to the chloroplast. In terms of biological role, binds to 23S rRNA. This Populus alba (White poplar) protein is Large ribosomal subunit protein uL14c.